The sequence spans 564 residues: Probable lysosomal cobalamin transporter (564 aa).

9 helical membrane-spanning segments follow: residues 8 to 28, 41 to 61, 94 to 114, 144 to 164, 188 to 208, 312 to 332, 375 to 395, 418 to 438, and 506 to 526; these read LIWS…STFI, VTLI…LLPV, TIVY…GIPF, YTLF…FIPT, ALTF…IIYT, LLAG…LCVT, VIFT…IAAF, LLLT…VAVI, and FFGA…LLVL.

Belongs to the LIMR family. LMBRD1 subfamily.

It is found in the lysosome membrane. Its function is as follows. Probable lysosomal cobalamin transporter. Required to export cobalamin from lysosomes allowing its conversion to cofactors. The polypeptide is Probable lysosomal cobalamin transporter (Aspergillus clavatus (strain ATCC 1007 / CBS 513.65 / DSM 816 / NCTC 3887 / NRRL 1 / QM 1276 / 107)).